The following is a 46-amino-acid chain: Cystatin WCPI-3 (46 aa).

The short motif at 35–38 is the Secondary area of contact element; sequence VVAG.

It belongs to the cystatin family. Phytocystatin subfamily.

Inhibitor of papain. The chain is Cystatin WCPI-3 from Wisteria floribunda (Japanese wisteria).